Reading from the N-terminus, the 294-residue chain is N-acetylmuramic acid 6-phosphate etherase (294 aa).

An SIS domain is found at 54–217; sequence VIQSFEEEGR…STASMIGVGK (164 aa). Glu82 (proton donor) is an active-site residue. The active site involves Glu113.

This sequence belongs to the GCKR-like family. MurNAc-6-P etherase subfamily. In terms of assembly, homodimer.

The enzyme catalyses N-acetyl-D-muramate 6-phosphate + H2O = N-acetyl-D-glucosamine 6-phosphate + (R)-lactate. Its pathway is amino-sugar metabolism; N-acetylmuramate degradation. Specifically catalyzes the cleavage of the D-lactyl ether substituent of MurNAc 6-phosphate, producing GlcNAc 6-phosphate and D-lactate. In Bacillus anthracis (strain A0248), this protein is N-acetylmuramic acid 6-phosphate etherase.